The sequence spans 929 residues: Dual specificity protein phosphatase PHS1 (929 aa).

2 disordered regions span residues 1–27 and 545–618; these read MAEPEKKRDQPFSQEKDEEKDLYLVHD and PESP…SLSS. Basic and acidic residues-rich tracts occupy residues 552-580 and 591-606; these read HGHEVNHYPSPSKDRVPSDNSSDHSESDM and ENKEDGSSPKSRESWH. Positions 703–848 constitute a Tyrosine-protein phosphatase domain; that stretch reads KPSMIQENLF…LINLDKKCHG (146 aa). The active-site Phosphocysteine intermediate is C792. A substrate-binding site is contributed by 792–798; that stretch reads CFEGRSR. The Nuclear export signal signature appears at 903–911; sequence QKALEALKL.

Interacts with MPK18. As to expression, expressed in roots, leaves and flowers.

Its subcellular location is the cytoplasm. The enzyme catalyses O-phospho-L-seryl-[protein] + H2O = L-seryl-[protein] + phosphate. It catalyses the reaction O-phospho-L-threonyl-[protein] + H2O = L-threonyl-[protein] + phosphate. The catalysed reaction is O-phospho-L-tyrosyl-[protein] + H2O = L-tyrosyl-[protein] + phosphate. Functionally, probable dual specificity phosphatase that binds and dephosphorylates MPK18, modulating the organization and dynamics of cortical microtubules. Acts as a negative regulator of abscisic acid (ABA) signaling during seed germination and light-induced stomata aperture. The protein is Dual specificity protein phosphatase PHS1 (PHS1) of Arabidopsis thaliana (Mouse-ear cress).